Consider the following 806-residue polypeptide: Phenylalanine--tRNA ligase beta subunit (806 aa).

One can recognise a tRNA-binding domain in the interval 40–155; it reads NKGVKGVVVG…SDAEVGADAL (116 aa). One can recognise a B5 domain in the interval 409–484; the sequence is VQERTVSVTA…RLYGYDHIPV (76 aa). Mg(2+)-binding residues include Asp462, Asp468, Glu471, and Glu472. The 94-residue stretch at 712 to 805 folds into the FDX-ACB domain; the sequence is PRFPSMTRDM…VEEKFGAELR (94 aa).

It belongs to the phenylalanyl-tRNA synthetase beta subunit family. Type 1 subfamily. Tetramer of two alpha and two beta subunits. The cofactor is Mg(2+).

It is found in the cytoplasm. It carries out the reaction tRNA(Phe) + L-phenylalanine + ATP = L-phenylalanyl-tRNA(Phe) + AMP + diphosphate + H(+). The polypeptide is Phenylalanine--tRNA ligase beta subunit (Bacillus cereus (strain ATCC 14579 / DSM 31 / CCUG 7414 / JCM 2152 / NBRC 15305 / NCIMB 9373 / NCTC 2599 / NRRL B-3711)).